A 401-amino-acid polypeptide reads, in one-letter code: Mu-type opioid receptor (401 aa).

At 1–69 the chain is on the extracellular side; the sequence is MDSGAVPTNA…CPSAGSPSMI (69 aa). N-linked (GlcNAc...) asparagine glycosylation is found at asparagine 9, asparagine 12, asparagine 34, asparagine 41, and asparagine 49. Residues 70–94 traverse the membrane as a helical segment; that stretch reads TAIIIMALYSIVCVVGLFGNFLVMY. Topologically, residues 95 to 107 are cytoplasmic; sequence VIVRYTKMKTATN. Residues 108–132 traverse the membrane as a helical segment; it reads IYIFNLALADALATSTLPFQSVNYL. Residues 133 to 143 are Extracellular-facing; sequence MGTWPFGTILC. A disulfide bond links cysteine 143 and cysteine 220. A helical membrane pass occupies residues 144 to 166; the sequence is KIVISIDYYNMFTSIFTLCTMSV. Residues 167–186 lie on the Cytoplasmic side of the membrane; that stretch reads DRYIAVCHPVKALDLRTPRN. A Phosphotyrosine modification is found at tyrosine 169. Residues 187-208 traverse the membrane as a helical segment; sequence AKIINICNWILSSAIGLPVMFM. Residues 209–231 are Extracellular-facing; it reads ATTKYRQGSIDCTLTFSHPTWYW. Residues 232-256 form a helical membrane-spanning segment; the sequence is ENLLKICVFIFAFIMPILIITVCYG. At 257–280 the chain is on the cytoplasmic side; sequence LMILRLKSVRMLSGSKEKDRNLRR. A helical transmembrane segment spans residues 281 to 307; sequence ITRMVLVVVAVFIVCWTPIHIYVIIKA. The Extracellular segment spans residues 308 to 315; it reads LITIPETT. The chain crosses the membrane as a helical span at residues 316–339; it reads FQTVSWHFCIALGYTNSCLNPVLY. The NPxxY; plays a role in stabilizing the activated conformation of the receptor motif lies at 335-339; it reads NPVLY. Topologically, residues 340–401 are cytoplasmic; sequence AFLDENFKRC…NLEAETTPLP (62 aa). Cysteine 354 carries S-palmitoyl cysteine lipidation. The disordered stretch occupies residues 365-389; that stretch reads NSTRIRQNTRDHPSTANTVDRTNHQ. Residue serine 366 is modified to Phosphoserine. Threonine 373 bears the Phosphothreonine mark. Serine 378 carries the phosphoserine modification. Position 397 is a phosphothreonine (threonine 397).

The protein belongs to the G-protein coupled receptor 1 family. In terms of assembly, forms homooligomers and heterooligomers with other GPCRs, such as OPRD1, OPRK1, OPRL1, NPFFR2, ADRA2A, SSTR2, CNR1 and CCR5 (probably in dimeric forms). Interacts with heterotrimeric G proteins; interaction with a heterotrimeric complex containing GNAI1, GNB1 and GNG2 stabilizes the active conformation of the receptor and increases its affinity for endomorphin-2, the synthetic opioid peptide DAMGO and for morphinan agonists. Interacts with PPL; the interaction disrupts agonist-mediated G-protein activation. Interacts (via C-terminus) with DNAJB4 (via C-terminus). Interacts with calmodulin; the interaction inhibits the constitutive activity of OPRM1; it abolishes basal and attenuates agonist-stimulated G-protein coupling. Interacts with FLNA, PLD2, RANBP9 and WLS and GPM6A. Interacts with RTP4. Interacts with SYP and GNAS. Interacts with RGS9, RGS17, RGS20, RGS4, PPP1R9B and HINT1. Post-translationally, phosphorylated. Differentially phosphorylated in basal and agonist-induced conditions. Agonist-mediated phosphorylation modulates receptor internalization. Phosphorylated by GRK2 in a agonist-dependent manner. Phosphorylation at Tyr-169 requires receptor activation, is dependent on non-receptor protein tyrosine kinase Src and results in a decrease in agonist efficacy by reducing G-protein coupling efficiency. Phosphorylated on tyrosine residues; the phosphorylation is involved in agonist-induced G-protein-independent receptor down-regulation. Phosphorylation at Ser-378 is involved in G-protein-dependent but not beta-arrestin-dependent activation of the ERK pathway. Ubiquitinated. A basal ubiquitination seems not to be related to degradation. Ubiquitination is increased upon formation of OPRM1:OPRD1 oligomers leading to proteasomal degradation; the ubiquitination is diminished by RTP4.

The protein resides in the cell membrane. It is found in the cell projection. It localises to the axon. Its subcellular location is the perikaryon. The protein localises to the dendrite. The protein resides in the endosome. Functionally, receptor for endogenous opioids such as beta-endorphin and endomorphin. Receptor for natural and synthetic opioids including morphine, heroin, DAMGO, fentanyl, etorphine, buprenorphin and methadone. Also activated by enkephalin peptides, such as Met-enkephalin or Met-enkephalin-Arg-Phe, with higher affinity for Met-enkephalin-Arg-Phe. Agonist binding to the receptor induces coupling to an inactive GDP-bound heterotrimeric G-protein complex and subsequent exchange of GDP for GTP in the G-protein alpha subunit leading to dissociation of the G-protein complex with the free GTP-bound G-protein alpha and the G-protein beta-gamma dimer activating downstream cellular effectors. The agonist- and cell type-specific activity is predominantly coupled to pertussis toxin-sensitive G(i) and G(o) G alpha proteins, GNAI1, GNAI2, GNAI3 and GNAO1, and to a lesser extent to pertussis toxin-insensitive G alpha proteins GNAZ and GNA15. They mediate an array of downstream cellular responses, including inhibition of adenylate cyclase activity and both N-type and L-type calcium channels, activation of inward rectifying potassium channels, mitogen-activated protein kinase (MAPK), phospholipase C (PLC), phosphoinositide/protein kinase (PKC), phosphoinositide 3-kinase (PI3K) and regulation of NF-kappa-B. Also couples to adenylate cyclase stimulatory G alpha proteins. The selective temporal coupling to G-proteins and subsequent signaling can be regulated by RGSZ proteins, such as RGS9, RGS17 and RGS4. Phosphorylation by members of the GPRK subfamily of Ser/Thr protein kinases and association with beta-arrestins is involved in short-term receptor desensitization. Beta-arrestins associate with the GPRK-phosphorylated receptor and uncouple it from the G-protein thus terminating signal transduction. The phosphorylated receptor is internalized through endocytosis via clathrin-coated pits which involves beta-arrestins. The activation of the ERK pathway occurs either in a G-protein-dependent or a beta-arrestin-dependent manner and is regulated by agonist-specific receptor phosphorylation. Acts as a class A G-protein coupled receptor (GPCR) which dissociates from beta-arrestin at or near the plasma membrane and undergoes rapid recycling. Receptor down-regulation pathways are varying with the agonist and occur dependent or independent of G-protein coupling. Endogenous ligands induce rapid desensitization, endocytosis and recycling. Heterooligomerization with other GPCRs can modulate agonist binding, signaling and trafficking properties. Involved in neurogenesis. This chain is Mu-type opioid receptor (OPRM1), found in Bos taurus (Bovine).